The chain runs to 181 residues: Large ribosomal subunit protein uL6 (181 aa).

Belongs to the universal ribosomal protein uL6 family. As to quaternary structure, part of the 50S ribosomal subunit.

Its function is as follows. This protein binds to the 23S rRNA, and is important in its secondary structure. It is located near the subunit interface in the base of the L7/L12 stalk, and near the tRNA binding site of the peptidyltransferase center. The protein is Large ribosomal subunit protein uL6 of Rhodopirellula baltica (strain DSM 10527 / NCIMB 13988 / SH1).